Reading from the N-terminus, the 424-residue chain is Glutamyl-tRNA reductase (424 aa).

Substrate is bound by residues 53-56, S111, 116-118, and Q122; these read TCNR and EPQ. C54 functions as the Nucleophile in the catalytic mechanism. NADP(+) is bound at residue 191 to 196; the sequence is GAGEMI.

This sequence belongs to the glutamyl-tRNA reductase family. In terms of assembly, homodimer.

It carries out the reaction (S)-4-amino-5-oxopentanoate + tRNA(Glu) + NADP(+) = L-glutamyl-tRNA(Glu) + NADPH + H(+). It functions in the pathway porphyrin-containing compound metabolism; protoporphyrin-IX biosynthesis; 5-aminolevulinate from L-glutamyl-tRNA(Glu): step 1/2. Functionally, catalyzes the NADPH-dependent reduction of glutamyl-tRNA(Glu) to glutamate 1-semialdehyde (GSA). This Bordetella avium (strain 197N) protein is Glutamyl-tRNA reductase.